Reading from the N-terminus, the 91-residue chain is Small ribosomal subunit protein uS15 (91 aa).

It belongs to the universal ribosomal protein uS15 family. Part of the 30S ribosomal subunit. Forms a bridge to the 50S subunit in the 70S ribosome, contacting the 23S rRNA.

Its function is as follows. One of the primary rRNA binding proteins, it binds directly to 16S rRNA where it helps nucleate assembly of the platform of the 30S subunit by binding and bridging several RNA helices of the 16S rRNA. Forms an intersubunit bridge (bridge B4) with the 23S rRNA of the 50S subunit in the ribosome. This is Small ribosomal subunit protein uS15 from Rickettsia felis (strain ATCC VR-1525 / URRWXCal2) (Rickettsia azadi).